The primary structure comprises 653 residues: Chaperone protein DnaK (653 aa).

Phosphothreonine; by autocatalysis is present on threonine 198. The span at 608–617 shows a compositional bias: low complexity; that stretch reads DPEAAAHAAG. The segment at 608-653 is disordered; sequence DPEAAAHAAGMHGGAATGGGDGANKHGKGAEDVVEAEFEEVNDDKK. A compositionally biased stretch (gly residues) spans 618–629; it reads MHGGAATGGGDG. The segment covering 639–653 has biased composition (acidic residues); sequence DVVEAEFEEVNDDKK.

Belongs to the heat shock protein 70 family.

Its function is as follows. Acts as a chaperone. This chain is Chaperone protein DnaK, found in Magnetococcus marinus (strain ATCC BAA-1437 / JCM 17883 / MC-1).